The primary structure comprises 239 residues: tRNA (guanine-N(7)-)-methyltransferase (239 aa).

Residues E69, E94, D121, and D144 each contribute to the S-adenosyl-L-methionine site. The active site involves D144. K148 provides a ligand contact to substrate. Residues 150–155 form an interaction with RNA region; the sequence is RHNKRR. Residues D180 and 217–220 each bind substrate; that span reads TKFE.

Belongs to the class I-like SAM-binding methyltransferase superfamily. TrmB family. Monomer.

The enzyme catalyses guanosine(46) in tRNA + S-adenosyl-L-methionine = N(7)-methylguanosine(46) in tRNA + S-adenosyl-L-homocysteine. The protein operates within tRNA modification; N(7)-methylguanine-tRNA biosynthesis. Functionally, catalyzes the formation of N(7)-methylguanine at position 46 (m7G46) in tRNA. This is tRNA (guanine-N(7)-)-methyltransferase from Salmonella paratyphi A (strain ATCC 9150 / SARB42).